A 386-amino-acid chain; its full sequence is Patatin-2-Kuras 3 (386 aa).

Positions 1–23 (MATTKSVLVLFFMILATTSSTCA) are cleaved as a signal peptide. Residues 32–229 (LSIDGGGIKG…TVGDPALLSL (198 aa)) enclose the PNPLA domain. The GXGXXG motif lies at 36–41 (GGGIKG). The short motif at 75–79 (GTSTG) is the GXSXG element. The active-site Nucleophile is the S77. An N-linked (GlcNAc...) asparagine glycan is attached at N115. D215 acts as the Proton acceptor in catalysis. Positions 215–217 (DGA) match the DGA/G motif. Residues 321–384 (ENALTGTTTE…DRKKLRANKA (64 aa)) adopt a coiled-coil conformation.

Belongs to the patatin family. Tuber.

Its subcellular location is the vacuole. Its function is as follows. Probable lipolytic acyl hydrolase (LAH), an activity which is thought to be involved in the response of tubers to pathogens. This is Patatin-2-Kuras 3 (pat2-k3) from Solanum tuberosum (Potato).